Consider the following 74-residue polypeptide: Conotoxin Vi15a (74 aa).

Positions 1–19 are cleaved as a signal peptide; the sequence is MMPVILLLLLSLAIRCADG. The propeptide occupies 20-43; that stretch reads KAVQGDSDPSASLLTGDKNHDLPV. The residue at position 72 (W72) is a Tryptophan amide.

In terms of processing, contains four disulfide bonds. In terms of tissue distribution, expressed by the venom duct.

The protein resides in the secreted. This Conus virgo (Virgin cone) protein is Conotoxin Vi15a.